Consider the following 85-residue polypeptide: Phosphocarrier protein HPr (85 aa).

Positions 1–85 (MYSKDVEIIA…HLVALIPTLE (85 aa)) constitute an HPr domain. His15 acts as the Pros-phosphohistidine intermediate in catalysis.

The protein belongs to the HPr family.

The protein resides in the cytoplasm. General (non sugar-specific) component of the phosphoenolpyruvate-dependent sugar phosphotransferase system (sugar PTS). This major carbohydrate active-transport system catalyzes the phosphorylation of incoming sugar substrates concomitantly with their translocation across the cell membrane. The phosphoryl group from phosphoenolpyruvate (PEP) is transferred to the phosphoryl carrier protein HPr by enzyme I. Phospho-HPr then transfers it to the PTS EIIA domain. The sequence is that of Phosphocarrier protein HPr (ptsH) from Haemophilus influenzae (strain ATCC 51907 / DSM 11121 / KW20 / Rd).